The chain runs to 346 residues: Aldose 1-epimerase (346 aa).

Position 79 (R79) interacts with substrate. H175 acts as the Proton donor in catalysis. Position 245 (D245) interacts with substrate. The active-site Proton acceptor is E309.

This sequence belongs to the aldose epimerase family.

It is found in the cytoplasm. It catalyses the reaction alpha-D-glucose = beta-D-glucose. Its pathway is carbohydrate metabolism; hexose metabolism. In terms of biological role, mutarotase converts alpha-aldose to the beta-anomer. It is active on D-glucose, L-arabinose, D-xylose, D-galactose, maltose and lactose. This chain is Aldose 1-epimerase (galM), found in Escherichia coli (strain K12).